A 20-amino-acid polypeptide reads, in one-letter code: Small ribosomal subunit protein bS20 (20 aa).

Residues 1 to 20 (ANNPGARKAIRKIEARTEVN) form a disordered region. Residues 11–20 (RKIEARTEVN) are compositionally biased toward basic and acidic residues.

It belongs to the bacterial ribosomal protein bS20 family.

Binds directly to 16S ribosomal RNA. This is Small ribosomal subunit protein bS20 (rpsT) from Brevundimonas vesicularis (Pseudomonas vesicularis).